A 447-amino-acid polypeptide reads, in one-letter code: Argininosuccinate lyase (447 aa).

It belongs to the lyase 1 family. Argininosuccinate lyase subfamily.

It localises to the cytoplasm. It catalyses the reaction 2-(N(omega)-L-arginino)succinate = fumarate + L-arginine. It participates in amino-acid biosynthesis; L-arginine biosynthesis; L-arginine from L-ornithine and carbamoyl phosphate: step 3/3. The polypeptide is Argininosuccinate lyase (Bacteroides fragilis (strain ATCC 25285 / DSM 2151 / CCUG 4856 / JCM 11019 / LMG 10263 / NCTC 9343 / Onslow / VPI 2553 / EN-2)).